The sequence spans 596 residues: Two-component response regulator ARR12 (596 aa).

The 116-residue stretch at 18 to 133 folds into the Response regulatory domain; the sequence is RVLAVDDDQT…ELKNIWQHVV (116 aa). Position 69 is a 4-aspartylphosphate (Asp69). The segment covering 138 to 153 has biased composition (basic and acidic residues); it reads DKNRGSNNNGDKRDGS. The disordered stretch occupies residues 138 to 192; it reads DKNRGSNNNGDKRDGSGNEGVGNSDQNNGKGNRKRKDQYNEDEDEDRDDNDDSCA. Over residues 158–167 the composition is skewed to polar residues; the sequence is VGNSDQNNGK. Acidic residues predominate over residues 177–189; that stretch reads NEDEDEDRDDNDD. The Nuclear localization signal motif lies at 194–197; sequence KKQR. Positions 197-247 form a DNA-binding region, myb-like GARP; it reads RVVWTVELHKKFVAAVNQLGYEKAMPKKILDLMNVEKLTRENVASHLQKFR. Residues 437 to 467 form a disordered region; the sequence is NAVSSSTHPPPPAHNSNSINHQFDVSPLPHS. A compositionally biased stretch (polar residues) spans 450 to 459; sequence HNSNSINHQF.

The protein belongs to the ARR family. Type-B subfamily. Binds the target DNA as a monomer. Post-translationally, two-component system major event consists of a His-to-Asp phosphorelay between a sensor histidine kinase (HK) and a response regulator (RR). In plants, the His-to-Asp phosphorelay involves an additional intermediate named Histidine-containing phosphotransfer protein (HPt). This multistep phosphorelay consists of a His-Asp-His-Asp sequential transfer of a phosphate group between first a His and an Asp of the HK protein, followed by the transfer to a conserved His of the HPt protein and finally the transfer to an Asp in the receiver domain of the RR protein. As to expression, detected in the whole plant. Predominantly expressed in leaves. Expressed at the root transition zone.

It is found in the nucleus. In terms of biological role, transcriptional activator that binds specifically to the DNA sequence 5'-[AG]GATT-3'. Functions as a response regulator involved in His-to-Asp phosphorelay signal transduction system. Phosphorylation of the Asp residue in the receiver domain activates the ability of the protein to promote the transcription of target genes. Could directly activate some type-A response regulators in response to cytokinins. Involved in the root-meristem size determination through the regulation of cell differentiation. Involved in activating SHY2 during meristem growth and controls PIN expression via activation of SHY2. The protein is Two-component response regulator ARR12 (ARR12) of Arabidopsis thaliana (Mouse-ear cress).